The following is a 336-amino-acid chain: 3-isopropylmalate dehydrogenase (336 aa).

The substrate site is built by Arg-86, Arg-96, Arg-117, and Asp-201. The Mg(2+) site is built by Asp-201, Asp-225, and Asp-229. Residue 258-270 (GAAFDIAGKGIAN) participates in NAD(+) binding.

This sequence belongs to the isocitrate and isopropylmalate dehydrogenases family. As to quaternary structure, homotetramer. Mg(2+) serves as cofactor. The cofactor is Mn(2+).

It localises to the cytoplasm. It catalyses the reaction (2R,3S)-3-isopropylmalate + NAD(+) = 4-methyl-2-oxopentanoate + CO2 + NADH. It participates in amino-acid biosynthesis; L-leucine biosynthesis; L-leucine from 3-methyl-2-oxobutanoate: step 3/4. In terms of biological role, catalyzes the oxidation of 3-carboxy-2-hydroxy-4-methylpentanoate (3-isopropylmalate) to 3-carboxy-4-methyl-2-oxopentanoate. The product decarboxylates to 4-methyl-2 oxopentanoate. This chain is 3-isopropylmalate dehydrogenase (leuB), found in Saccharolobus solfataricus (strain ATCC 35092 / DSM 1617 / JCM 11322 / P2) (Sulfolobus solfataricus).